The primary structure comprises 547 residues: Probable high-affinity hexose transporter ght8, mitochondrial (547 aa).

Residues 1 to 21 (MGKTLTIVMLVFVSMAGWMFG) constitute a mitochondrion transit peptide. The Mitochondrial intermembrane segment spans residues 22–86 (ADTGSIGGIT…SPLMDRIGKR (65 aa)). A helical membrane pass occupies residues 87–107 (VSIMFWTIVYLIGIILQVTAV). Residues 108-112 (PSWVQ) lie on the Cytoplasmic side of the membrane. Residues 113-133 (IMVAKIWTGLAIGALSVLAPG) form a helical membrane-spanning segment. At 134–144 (FQSEVAPATLR) the chain is on the mitochondrial intermembrane side. The helical transmembrane segment at 145 to 165 (GTIVTTYQLAVTGGIFIAACI) threads the bilayer. The Cytoplasmic segment spans residues 166–179 (NMGTHKLHKTAQWR). The helical transmembrane segment at 180-200 (VSMGINLLWGIIMFIGISFLP) threads the bilayer. The Mitochondrial intermembrane portion of the chain corresponds to 201–304 (ESPRYLIAIG…TGMNSPYLSA (104 aa)). Residues 305–325 (LILDAVNFGCTFGGLFVLEFF) traverse the membrane as a helical segment. Topologically, residues 326 to 328 (GRR) are cytoplasmic. A helical transmembrane segment spans residues 329-349 (MPLIIGGVWQSITFFIYAAVG). Residues 350–363 (NRALTRKNGTSNHR) lie on the Mitochondrial intermembrane side of the membrane. The chain crosses the membrane as a helical span at residues 364–384 (AGAVMIVFSCLFIFSFAQTWG). At 385–404 (PAAYVIVGESYPIRYRSKCA) the chain is on the cytoplasmic side. The helical transmembrane segment at 405-425 (AVATTGNWLWGFLITFFTPFI) threads the bilayer. Over 426–432 (SDSIGFK) the chain is Mitochondrial intermembrane. The helical transmembrane segment at 433 to 453 (YGYIFAACNLCAACIIFLFAH) threads the bilayer. Over 454 to 547 (ETKGLTLEEI…NYVDEQDRYA (94 aa)) the chain is Cytoplasmic. A disordered region spans residues 482–547 (GQAAKQQQEV…NYVDEQDRYA (66 aa)). A compositionally biased stretch (low complexity) spans 517-529 (TSSNDITSSTSSS). Ser-519 is subject to Phosphoserine. Residues Thr-523 and Thr-526 each carry the phosphothreonine modification. Ser-527, Ser-528, Ser-529, and Ser-537 each carry phosphoserine.

This sequence belongs to the major facilitator superfamily. Sugar transporter (TC 2.A.1.1) family.

It localises to the mitochondrion membrane. This Schizosaccharomyces pombe (strain 972 / ATCC 24843) (Fission yeast) protein is Probable high-affinity hexose transporter ght8, mitochondrial (ght8).